Here is a 123-residue protein sequence, read N- to C-terminus: Ribosome-binding factor A (123 aa).

This sequence belongs to the RbfA family. Monomer. Binds 30S ribosomal subunits, but not 50S ribosomal subunits or 70S ribosomes.

The protein resides in the cytoplasm. Its function is as follows. One of several proteins that assist in the late maturation steps of the functional core of the 30S ribosomal subunit. Associates with free 30S ribosomal subunits (but not with 30S subunits that are part of 70S ribosomes or polysomes). Required for efficient processing of 16S rRNA. May interact with the 5'-terminal helix region of 16S rRNA. In Trichlorobacter lovleyi (strain ATCC BAA-1151 / DSM 17278 / SZ) (Geobacter lovleyi), this protein is Ribosome-binding factor A.